A 379-amino-acid chain; its full sequence is Cobalt-precorrin-5B C(1)-methyltransferase (379 aa).

The protein belongs to the CbiD family.

It carries out the reaction Co-precorrin-5B + S-adenosyl-L-methionine = Co-precorrin-6A + S-adenosyl-L-homocysteine. The protein operates within cofactor biosynthesis; adenosylcobalamin biosynthesis; cob(II)yrinate a,c-diamide from sirohydrochlorin (anaerobic route): step 6/10. Catalyzes the methylation of C-1 in cobalt-precorrin-5B to form cobalt-precorrin-6A. The chain is Cobalt-precorrin-5B C(1)-methyltransferase from Cyanothece sp. (strain PCC 7425 / ATCC 29141).